The chain runs to 455 residues: Tubulin alpha-1 chain (455 aa).

Positions 11, 75, 144, 148, 149, 183, 210, and 232 each coordinate GTP. E75 is a Mg(2+) binding site. E258 is a catalytic residue.

This sequence belongs to the tubulin family. In terms of assembly, dimer of alpha and beta chains. A typical microtubule is a hollow water-filled tube with an outer diameter of 25 nm and an inner diameter of 15 nM. Alpha-beta heterodimers associate head-to-tail to form protofilaments running lengthwise along the microtubule wall with the beta-tubulin subunit facing the microtubule plus end conferring a structural polarity. Microtubules usually have 13 protofilaments but different protofilament numbers can be found in some organisms and specialized cells. It depends on Mg(2+) as a cofactor.

Its subcellular location is the cytoplasm. It localises to the cytoskeleton. It catalyses the reaction GTP + H2O = GDP + phosphate + H(+). Its function is as follows. Tubulin is the major constituent of microtubules, a cylinder consisting of laterally associated linear protofilaments composed of alpha- and beta-tubulin heterodimers. Microtubules grow by the addition of GTP-tubulin dimers to the microtubule end, where a stabilizing cap forms. Below the cap, tubulin dimers are in GDP-bound state, owing to GTPase activity of alpha-tubulin. The protein is Tubulin alpha-1 chain (nda2) of Schizosaccharomyces pombe (strain 972 / ATCC 24843) (Fission yeast).